Reading from the N-terminus, the 159-residue chain is Nucleotide-binding protein PLES_47741 (159 aa).

Belongs to the YajQ family.

Nucleotide-binding protein. This chain is Nucleotide-binding protein PLES_47741, found in Pseudomonas aeruginosa (strain LESB58).